Reading from the N-terminus, the 251-residue chain is MESYLTVIEQNGQLLVDSREVAEMVGKRHTDLLRSIDGYVAILLNAKLRSVEFFLESTYKDATGRSLKHFHLTRKGCDMVANKMTGAKGVLFTAQYVSKFEEMEKALKARPSLIDTYLDMNEDERAIAYFTERKAKRELQEQLTLAEPKVEKYDRFLNTDGLMKIGQVAKAIGIKGMGQNNLFRFLRENKVLIDGTNKNAPYQKYVERGFFQVKTQETSVGIKTITLVTPKGADFIVDLLKKHGHKREIAS.

In Bacillus subtilis (strain 168), this protein is SPbeta prophage-derived putative antirepressor protein YoqD (yoqD).